The primary structure comprises 465 residues: NADH-quinone oxidoreductase subunit N (465 aa).

Helical transmembrane passes span isoleucine 6 to phenylalanine 26, threonine 30 to alanine 50, leucine 66 to leucine 86, serine 98 to isoleucine 118, alanine 156 to valine 176, isoleucine 194 to phenylalanine 214, proline 226 to isoleucine 246, phenylalanine 261 to leucine 281, leucine 289 to threonine 309, leucine 317 to isoleucine 337, isoleucine 363 to isoleucine 383, glycine 391 to leucine 411, and serine 432 to glutamate 452.

It belongs to the complex I subunit 2 family. As to quaternary structure, NDH-1 is composed of 14 different subunits. Subunits NuoA, H, J, K, L, M, N constitute the membrane sector of the complex.

It is found in the cell membrane. The enzyme catalyses a quinone + NADH + 5 H(+)(in) = a quinol + NAD(+) + 4 H(+)(out). Its function is as follows. NDH-1 shuttles electrons from NADH, via FMN and iron-sulfur (Fe-S) centers, to quinones in the respiratory chain. The immediate electron acceptor for the enzyme in this species is believed to be ubiquinone. Couples the redox reaction to proton translocation (for every two electrons transferred, four hydrogen ions are translocated across the cytoplasmic membrane), and thus conserves the redox energy in a proton gradient. This chain is NADH-quinone oxidoreductase subunit N, found in Wolbachia sp. subsp. Brugia malayi (strain TRS).